The following is a 229-amino-acid chain: NADH dehydrogenase [ubiquinone] iron-sulfur protein 8, mitochondrial (229 aa).

A mitochondrion-targeting transit peptide spans 1–41 (MAAILARKSLSALRSRQLVLAGHTIEGTNGYNRTLLGTRSF). 4Fe-4S ferredoxin-type domains follow at residues 121–150 (RRYATGEERCIACKLCEAICPAQAITIEAE) and 160–189 (TRYDIDMTKCIYCGFCQEACPVDAIVEGPN). Positions 130, 133, 136, 140, 169, 172, 175, and 179 each coordinate [4Fe-4S] cluster.

The protein belongs to the complex I 23 kDa subunit family. As to quaternary structure, complex I is composed of about 45 different subunits. This is a component of the iron-sulfur (IP) fragment of the enzyme. [4Fe-4S] cluster serves as cofactor. In terms of tissue distribution, lowest expression found in storage tissues of tubers. Higher expression in older leaves than younger ones. Highest expression found in flowers.

The protein localises to the mitochondrion inner membrane. The catalysed reaction is a ubiquinone + NADH + 5 H(+)(in) = a ubiquinol + NAD(+) + 4 H(+)(out). In terms of biological role, core subunit of the mitochondrial membrane respiratory chain NADH dehydrogenase (Complex I) that is believed to belong to the minimal assembly required for catalysis. Complex I functions in the transfer of electrons from NADH to the respiratory chain. The immediate electron acceptor for the enzyme is believed to be ubiquinone. May donate electrons to ubiquinone. This Solanum tuberosum (Potato) protein is NADH dehydrogenase [ubiquinone] iron-sulfur protein 8, mitochondrial.